The sequence spans 241 residues: Tumor necrosis factor receptor superfamily member 18 (241 aa).

The N-terminal stretch at 1-25 (MAQHGAMGAFRALCGLALLCALSLG) is a signal peptide. Residues 26-162 (QRPTGGPGCG…CVPGSPPAEP (137 aa)) lie on the Extracellular side of the membrane. Intrachain disulfides connect Cys-34–Cys-49, Cys-74–Cys-86, Cys-81–Cys-94, Cys-115–Cys-134, and Cys-128–Cys-153. 3 TNFR-Cys repeats span residues 34 to 72 (CGPG…EWDC), 74 to 112 (CVQP…GFQC), and 115 to 153 (CASG…NAVC). N-linked (GlcNAc...) asparagine glycosylation is present at Asn-146. A helical membrane pass occupies residues 163–183 (LGWLTVVLLAVAACVLLLTSA). Topologically, residues 184–241 (QLGLHIWQLRSQCMWPRETQLLLEVPPSTEDARSCQFPEEERGERSAEEKGRLGDLWV) are cytoplasmic. The interval 214-241 (DARSCQFPEEERGERSAEEKGRLGDLWV) is disordered. A compositionally biased stretch (basic and acidic residues) spans 222–241 (EEERGERSAEEKGRLGDLWV).

In terms of assembly, binds to TRAF1, TRAF2, and TRAF3, but not TRAF5 and TRAF6. Binds through its C-terminus to SIVA1/SIVA. Expressed in lymph node, peripheral blood leukocytes and weakly in spleen.

The protein localises to the cell membrane. It is found in the secreted. Receptor for TNFSF18. Seems to be involved in interactions between activated T-lymphocytes and endothelial cells and in the regulation of T-cell receptor-mediated cell death. Mediated NF-kappa-B activation via the TRAF2/NIK pathway. This is Tumor necrosis factor receptor superfamily member 18 (TNFRSF18) from Homo sapiens (Human).